The following is a 261-amino-acid chain: tRNA pseudouridine synthase A (261 aa).

The active-site Nucleophile is the Asp51. Tyr109 contacts substrate.

This sequence belongs to the tRNA pseudouridine synthase TruA family. Homodimer.

The enzyme catalyses uridine(38/39/40) in tRNA = pseudouridine(38/39/40) in tRNA. In terms of biological role, formation of pseudouridine at positions 38, 39 and 40 in the anticodon stem and loop of transfer RNAs. This chain is tRNA pseudouridine synthase A, found in Shewanella halifaxensis (strain HAW-EB4).